A 186-amino-acid chain; its full sequence is Translation initiation factor IF-3 (186 aa).

The protein belongs to the IF-3 family. In terms of assembly, monomer.

It localises to the cytoplasm. IF-3 binds to the 30S ribosomal subunit and shifts the equilibrium between 70S ribosomes and their 50S and 30S subunits in favor of the free subunits, thus enhancing the availability of 30S subunits on which protein synthesis initiation begins. This chain is Translation initiation factor IF-3, found in Chlamydia muridarum (strain MoPn / Nigg).